A 379-amino-acid polypeptide reads, in one-letter code: Chaperone protein DnaJ (379 aa).

The 66-residue stretch at 5–70 (DYYEVLGVEK…QKRAAYDQYG (66 aa)) folds into the J domain. A CR-type zinc finger spans residues 133 to 211 (GKSVEIRVPT…CHGQGRVEKT (79 aa)). Zn(2+) is bound by residues Cys-146, Cys-149, Cys-163, Cys-166, Cys-185, Cys-188, Cys-199, and Cys-202. CXXCXGXG motif repeat units lie at residues 146–153 (CDTCDGSG), 163–170 (CTTCHGQG), 185–192 (CPTCGGKG), and 199–206 (CDVCHGQG).

The protein belongs to the DnaJ family. As to quaternary structure, homodimer. Zn(2+) serves as cofactor.

It localises to the cytoplasm. Participates actively in the response to hyperosmotic and heat shock by preventing the aggregation of stress-denatured proteins and by disaggregating proteins, also in an autonomous, DnaK-independent fashion. Unfolded proteins bind initially to DnaJ; upon interaction with the DnaJ-bound protein, DnaK hydrolyzes its bound ATP, resulting in the formation of a stable complex. GrpE releases ADP from DnaK; ATP binding to DnaK triggers the release of the substrate protein, thus completing the reaction cycle. Several rounds of ATP-dependent interactions between DnaJ, DnaK and GrpE are required for fully efficient folding. Also involved, together with DnaK and GrpE, in the DNA replication of plasmids through activation of initiation proteins. The chain is Chaperone protein DnaJ from Pseudoalteromonas atlantica (strain T6c / ATCC BAA-1087).